A 171-amino-acid chain; its full sequence is UPF0098 protein aq_1250 (171 aa).

Belongs to the UPF0098 family.

This chain is UPF0098 protein aq_1250, found in Aquifex aeolicus (strain VF5).